A 280-amino-acid chain; its full sequence is MSSADWMAWIGRTEQVEDDICLAQAIAAAATLEPPSGAPTADSPLPPLWHWFYFLPRAPQSQLSSDGHPQRGGFIPPIPYPRRMFAGARIRFHHPLRIGQPARREGVIRNITQKSGRSGPLAFVTVGYQIYQHEMLCIEEEQDIVYREPGAPVPAPTPVELPPVHDAITRTVVPDPRLLFRFSALTFNAHRIHYDRPYAQHEEGYPGLVVHGPLVAVLLMELARHHTSRPIVGFSFRSQAPLFDLAPFRLLARPNGDRIDLEAQGPDGATALSATVELGG.

Belongs to the HTD2 family. In terms of assembly, homodimer.

It catalyses the reaction (3S)-citramalyl-CoA = 3-methylfumaryl-CoA + H2O. Inhibited by 3-methylfumaryl-CoA concentrations above 0.3 mM. Functionally, involved in the glyoxylate assimilation cycle used to regenerate acetyl-CoA and produce pyruvate as universal precursor for biosynthesis. Catalyzes the hydration of 3-methylfumaryl-CoA (mesaconyl-C4-CoA) to (3S)-citramalyl-CoA. This is Mesaconyl-C(4)-CoA hydratase (meh) from Chloroflexus aurantiacus (strain ATCC 29366 / DSM 635 / J-10-fl).